The sequence spans 367 residues: Cytochrome b (367 aa).

The next 4 helical transmembrane spans lie at 33-53 (FGSL…FLAM), 77-98 (WVLR…YLHI), 113-133 (WNMG…GYVL), and 178-198 (FFAF…VHLL). Heme b contacts are provided by histidine 83 and histidine 97. The heme b site is built by histidine 182 and histidine 196. Histidine 201 contributes to the a ubiquinone binding site. The next 4 membrane-spanning stretches (helical) occupy residues 226–246 (IKDI…VLFS), 288–308 (LGGV…PFLH), 320–340 (FSQC…WIGG), and 347–367 (YIII…VIMP).

Belongs to the cytochrome b family. As to quaternary structure, the cytochrome bc1 complex contains 11 subunits: 3 respiratory subunits (MT-CYB, CYC1 and UQCRFS1), 2 core proteins (UQCRC1 and UQCRC2) and 6 low-molecular weight proteins (UQCRH/QCR6, UQCRB/QCR7, UQCRQ/QCR8, UQCR10/QCR9, UQCR11/QCR10 and a cleavage product of UQCRFS1). This cytochrome bc1 complex then forms a dimer. Heme b is required as a cofactor.

It is found in the mitochondrion inner membrane. In terms of biological role, component of the ubiquinol-cytochrome c reductase complex (complex III or cytochrome b-c1 complex) that is part of the mitochondrial respiratory chain. The b-c1 complex mediates electron transfer from ubiquinol to cytochrome c. Contributes to the generation of a proton gradient across the mitochondrial membrane that is then used for ATP synthesis. The chain is Cytochrome b (MT-CYB) from Hypsugo savii (Savi's pipistrelle).